A 178-amino-acid chain; its full sequence is Aspartic proteinase nepenthesin-2 (178 aa).

Asp98 is a catalytic residue.

It belongs to the peptidase A1 family.

It is found in the secreted. The enzyme catalyses Similar to pepsin, but also cleaves on either side of Asp and at Lys-|-Arg.. With respect to regulation, inhibited by pepstatin and by diazoacetyl-D,L-norleucine methyl ester (DAN) in the presence of Cu(2+) ions. Functionally, extracellular proteinase found in the pitcher fluid of carnivorous plants. Digest prey for nitrogen uptake. The sequence is that of Aspartic proteinase nepenthesin-2 from Nepenthes distillatoria (Pitcher plant).